We begin with the raw amino-acid sequence, 346 residues long: Tetraacyldisaccharide 4'-kinase (346 aa).

Thr62–Thr69 serves as a coordination point for ATP.

It belongs to the LpxK family.

It carries out the reaction a lipid A disaccharide + ATP = a lipid IVA + ADP + H(+). Its pathway is glycolipid biosynthesis; lipid IV(A) biosynthesis; lipid IV(A) from (3R)-3-hydroxytetradecanoyl-[acyl-carrier-protein] and UDP-N-acetyl-alpha-D-glucosamine: step 6/6. Functionally, transfers the gamma-phosphate of ATP to the 4'-position of a tetraacyldisaccharide 1-phosphate intermediate (termed DS-1-P) to form tetraacyldisaccharide 1,4'-bis-phosphate (lipid IVA). The protein is Tetraacyldisaccharide 4'-kinase of Xanthomonas oryzae pv. oryzae (strain MAFF 311018).